The chain runs to 158 residues: Hypoxanthine DNA glycosylase (158 aa).

N39 is a catalytic residue.

Belongs to the uracil-DNA glycosylase (UDG) superfamily. Type 6 (HDG) family.

In terms of biological role, excises hypoxanthine, a deamination product of adenine, from double-stranded DNA. Acts on double-stranded DNA containing G/I, T/I, A/I and C/I base pairs, but not on single-stranded inosine-containing DNA. Also has minor xanthine DNA glycosylase activity. Lacks any detectable uracil-DNA glycosylase activity. In Methanosarcina barkeri (strain Fusaro / DSM 804), this protein is Hypoxanthine DNA glycosylase.